The chain runs to 301 residues: Mycothiol acetyltransferase (301 aa).

N-acetyltransferase domains lie at 6-151 (EWRQ…ILRD) and 153-301 (VSLR…QYGR). Residue 79–81 (LFV) coordinates acetyl-CoA. Residues Glu180, Lys219, and Glu235 each contribute to the 1D-myo-inositol 2-(L-cysteinylamino)-2-deoxy-alpha-D-glucopyranoside site. Acetyl-CoA contacts are provided by residues 239–241 (VGV) and 246–252 (QGGGLGR). Position 273 (Tyr273) interacts with 1D-myo-inositol 2-(L-cysteinylamino)-2-deoxy-alpha-D-glucopyranoside.

The protein belongs to the acetyltransferase family. MshD subfamily. In terms of assembly, monomer.

The enzyme catalyses 1D-myo-inositol 2-(L-cysteinylamino)-2-deoxy-alpha-D-glucopyranoside + acetyl-CoA = mycothiol + CoA + H(+). Its function is as follows. Catalyzes the transfer of acetyl from acetyl-CoA to desacetylmycothiol (Cys-GlcN-Ins) to form mycothiol. This is Mycothiol acetyltransferase from Amycolatopsis mediterranei (strain U-32).